A 52-amino-acid polypeptide reads, in one-letter code: Large ribosomal subunit protein eL40 (52 aa).

The Zn(2+) site is built by Cys-20, Cys-23, Cys-34, and Cys-39.

This sequence belongs to the eukaryotic ribosomal protein eL40 family. As to quaternary structure, component of the large ribosomal subunit. Mature ribosomes consist of a small (40S) and a large (60S) subunit. The 40S subunit contains about 32 different proteins and 1 molecule of RNA (18S). The 60S subunit contains 45 different proteins and 3 molecules of RNA (25S, 5.8S and 5S). Requires Zn(2+) as cofactor.

The protein localises to the cytoplasm. Its function is as follows. Component of the ribosome, a large ribonucleoprotein complex responsible for the synthesis of proteins in the cell. The small ribosomal subunit (SSU) binds messenger RNAs (mRNAs) and translates the encoded message by selecting cognate aminoacyl-transfer RNA (tRNA) molecules. The large subunit (LSU) contains the ribosomal catalytic site termed the peptidyl transferase center (PTC), which catalyzes the formation of peptide bonds, thereby polymerizing the amino acids delivered by tRNAs into a polypeptide chain. The nascent polypeptides leave the ribosome through a tunnel in the LSU and interact with protein factors that function in enzymatic processing, targeting, and the membrane insertion of nascent chains at the exit of the ribosomal tunnel. The protein is Large ribosomal subunit protein eL40 of Candida albicans (strain SC5314 / ATCC MYA-2876) (Yeast).